Here is a 196-residue protein sequence, read N- to C-terminus: Ribosome maturation factor RimP (196 aa).

The interval 164 to 196 (LAPQKPNKPGPKKTGHEKKKPSNESAAGKPRAE) is disordered. The span at 173–182 (GPKKTGHEKK) shows a compositional bias: basic residues.

The protein belongs to the RimP family.

It localises to the cytoplasm. Its function is as follows. Required for maturation of 30S ribosomal subunits. The sequence is that of Ribosome maturation factor RimP from Xanthomonas oryzae pv. oryzae (strain MAFF 311018).